The chain runs to 281 residues: Cytosolic Fe-S cluster assembly factor CFD1 (281 aa).

24-31 (GKGGVGKS) provides a ligand contact to ATP. [4Fe-4S] cluster is bound by residues C201 and C204.

It belongs to the Mrp/NBP35 ATP-binding proteins family. NUBP2/CFD1 subfamily. In terms of assembly, heterotetramer of 2 NBP35 and 2 CFD1 chains. Requires [4Fe-4S] cluster as cofactor.

It is found in the cytoplasm. Its function is as follows. Component of the cytosolic iron-sulfur (Fe/S) protein assembly (CIA) machinery. Required for maturation of extramitochondrial Fe-S proteins. The NBP35-CFD1 heterotetramer forms a Fe-S scaffold complex, mediating the de novo assembly of an Fe-S cluster and its transfer to target apoproteins. Required for biogenesis and export of both ribosomal subunits, which may reflect a role in assembly of the Fe/S clusters in RLI1, a protein which performs rRNA processing and ribosome export. The protein is Cytosolic Fe-S cluster assembly factor CFD1 of Eremothecium gossypii (strain ATCC 10895 / CBS 109.51 / FGSC 9923 / NRRL Y-1056) (Yeast).